The sequence spans 392 residues: MSTPSIVIASARTAVGSFNGAFANTPAHELGATVISAVLERAGVAAGEVNEVILGQVLPAGEGQNPARQAAMKAGVPQEATAWGMNQLCGSGLRAVALGMQQIATGDASIIVAGGMESMSMAPHCAHLAGGVKMGDFKMIDTMIKDGLTDAFYGYHMGTTAENVAKQWQLSRDEQDAFAVASQNKAEAAQKDGRFKDEIVPFIVKGRKGDITVDADEYIRHGATLDSMAKLRPAFDKEGTVTAGNASGLNDGAAAALLMSEAEASRRGIQPLGRIVSWATVGVDPKVMGTGPIPASRKALERAGWKIGDLDLVEANEAFAAQACAVNKDLGWDPSIVNVNGGAIAIGHPIGASGARILNTLLFEMKRRGARKGLATLCIGGGMGVAMCIESL.

Cys-89 serves as the catalytic Acyl-thioester intermediate. Catalysis depends on proton acceptor residues His-348 and Cys-378.

The protein belongs to the thiolase-like superfamily. Thiolase family. Homotetramer.

The protein resides in the cytoplasm. The enzyme catalyses 2 acetyl-CoA = acetoacetyl-CoA + CoA. The protein operates within biopolymer metabolism; poly-(R)-3-hydroxybutanoate biosynthesis. It functions in the pathway metabolic intermediate biosynthesis; (R)-mevalonate biosynthesis; (R)-mevalonate from acetyl-CoA: step 1/3. This is Acetyl-CoA acetyltransferase from Shinella zoogloeoides (Crabtreella saccharophila).